Reading from the N-terminus, the 511-residue chain is Protein phosphatase 2C 16 (511 aa).

The first 22 residues, 1 to 22, serve as a signal peptide directing secretion; sequence MEEMTPAVAMTLSLAANTMCES. A PPM-type phosphatase domain is found at 189 to 501; the sequence is LWGTVSIQGN…DNISIIVIDL (313 aa). Mn(2+)-binding residues include D243, G244, D432, and D492.

This sequence belongs to the PP2C family. As to quaternary structure, interacts with SWI3B (via N-terminus). Interacts with ABA-bounded PYR1, PYL1, PYL2, PYL3, PYL4, PYL5, PYL6, PYL8 and PYL9, and with free PYL2, PYL3, PYL4, PYL10 and PYL13. Mg(2+) serves as cofactor. Mn(2+) is required as a cofactor. Expressed in seeds, roots, stems, leaves and flowers, especially in meristematic tissues, guard cells, embryo and siliques.

It is found in the cytoplasm. The protein resides in the nucleus. The enzyme catalyses O-phospho-L-seryl-[protein] + H2O = L-seryl-[protein] + phosphate. The catalysed reaction is O-phospho-L-threonyl-[protein] + H2O = L-threonyl-[protein] + phosphate. Its activity is regulated as follows. Repressed by PYR/PYL/RCAR ABA receptors in an ABA-dependent manner. Functionally, key component and repressor of the abscisic acid (ABA) signaling pathway that regulates numerous ABA responses, such as stomatal closure, seed germination and inhibition of vegetative growth. Confers enhanced sensitivity to drought. This is Protein phosphatase 2C 16 (HAB1) from Arabidopsis thaliana (Mouse-ear cress).